Here is a 111-residue protein sequence, read N- to C-terminus: BET1-like protein (111 aa).

The Cytoplasmic portion of the chain corresponds to 1–86 (MADWARAQSP…MARSGQDNRK (86 aa)). Ser9 and Ser37 each carry phosphoserine. The region spanning 15–77 (EILDRENKRM…TGSVKRFSTM (63 aa)) is the t-SNARE coiled-coil homology domain. Residues 87–107 (LLCGMAVGLIVAFFILSYFLS) form a helical; Anchor for type IV membrane protein membrane-spanning segment. Residues 108–111 (RART) lie on the Lumenal side of the membrane.

In terms of assembly, component of a SNARE complex consisting of STX5, YKT6, GOSR1 and BET1L. Interacts with STX5.

The protein resides in the golgi apparatus membrane. The protein localises to the golgi apparatus. It is found in the trans-Golgi network membrane. Functionally, vesicle SNARE required for targeting and fusion of retrograde transport vesicles with the Golgi complex. Required for the integrity of the Golgi complex. This is BET1-like protein from Homo sapiens (Human).